Consider the following 461-residue polypeptide: Ribitol-5-phosphate transferase FKTN (461 aa).

The Cytoplasmic portion of the chain corresponds to 1–7 (MSRINKN). Residues 6 to 27 (KNVVLALLTLTSSAFLLFQLYY) are required and sufficient for interaction with POMGNT1. Residues 8 to 28 (VVLALLTLTSSAFLLFQLYYY) form a helical; Signal-anchor for type II membrane protein membrane-spanning segment. Residues 29-461 (KHYLSTRNGA…SEWDEVIQLY (433 aa)) lie on the Lumenal side of the membrane. N92 is a glycosylation site (N-linked (GlcNAc...) asparagine).

It belongs to the LicD transferase family. In terms of assembly, forms a complex composed of FKTN/fukutin, FKRP and RXYLT1/TMEM5. Interacts (via transmembrane domain) with POMGNT1; the interaction is direct and is required for normal POMGNT1 location in Golgi membranes. Expressed in the retina (at protein level).

The protein localises to the golgi apparatus membrane. It is found in the cytoplasm. The protein resides in the nucleus. It carries out the reaction 3-O-[beta-D-GalNAc-(1-&gt;3)-beta-D-GlcNAc-(1-&gt;4)-(O-6-P-alpha-D-Man)]-Thr-[protein] + CDP-L-ribitol = 3-O-[Rib-ol-P-3-beta-D-GalNAc-(1-&gt;3)-beta-D-GlcNAc-(1-&gt;4)-(O-6-P-alpha-D-Man)]-Thr-[protein] + CMP + H(+). It participates in protein modification; protein glycosylation. In terms of biological role, catalyzes the transfer of CDP-ribitol to the distal N-acetylgalactosamine of the phosphorylated O-mannosyl trisaccharide (N-acetylgalactosamine-beta-3-N-acetylglucosamine-beta-4-(phosphate-6-)mannose), a carbohydrate structure present in alpha-dystroglycan (DAG1). This constitutes the first step in the formation of the ribitol 5-phosphate tandem repeat which links the phosphorylated O-mannosyl trisaccharide to the ligand binding moiety composed of repeats of 3-xylosyl-alpha-1,3-glucuronic acid-beta-1. May interact with and reinforce a large complex encompassing the outside and inside of muscle membranes. Could be involved in brain development. The sequence is that of Ribitol-5-phosphate transferase FKTN from Macaca fascicularis (Crab-eating macaque).